The sequence spans 377 residues: DNA-directed RNA polymerase subunit alpha (377 aa).

Residues 1–259 (MSDSSHNLLY…KHFSVFEKMD (259 aa)) are alpha N-terminal domain (alpha-NTD). Positions 276 to 377 (KDDILHKLVL…KIRLSKNTKG (102 aa)) are alpha C-terminal domain (alpha-CTD).

It belongs to the RNA polymerase alpha chain family. In terms of assembly, homodimer. The RNAP catalytic core consists of 2 alpha, 1 beta, 1 beta' and 1 omega subunit. When a sigma factor is associated with the core the holoenzyme is formed, which can initiate transcription.

It carries out the reaction RNA(n) + a ribonucleoside 5'-triphosphate = RNA(n+1) + diphosphate. Its function is as follows. DNA-dependent RNA polymerase catalyzes the transcription of DNA into RNA using the four ribonucleoside triphosphates as substrates. This is DNA-directed RNA polymerase subunit alpha from Chlamydia trachomatis serovar A (strain ATCC VR-571B / DSM 19440 / HAR-13).